We begin with the raw amino-acid sequence, 435 residues long: Methionine aminopeptidase 2-2 (435 aa).

A disordered region spans residues 1 to 92; sequence MAAQTTEKLQ…VPVSNLFPNN (92 aa). Residues 24-33 are compositionally biased toward low complexity; that stretch reads DAPAAGQAEA. The span at 34–45 shows a compositional bias: acidic residues; it reads GEAEEDSDDEKD. The segment covering 59–73 has biased composition (basic residues); sequence AKKKKRKSKKKKKGG. H197 contributes to the substrate binding site. A divalent metal cation-binding residues include D217, D228, and H297. H305 contacts substrate. 2 residues coordinate a divalent metal cation: E330 and E425.

The protein belongs to the peptidase M24A family. Methionine aminopeptidase eukaryotic type 2 subfamily. Co(2+) serves as cofactor. The cofactor is Zn(2+). Mn(2+) is required as a cofactor. Requires Fe(2+) as cofactor.

The protein localises to the cytoplasm. The enzyme catalyses Release of N-terminal amino acids, preferentially methionine, from peptides and arylamides.. Cotranslationally removes the N-terminal methionine from nascent proteins. The N-terminal methionine is often cleaved when the second residue in the primary sequence is small and uncharged (Met-Ala-, Cys, Gly, Pro, Ser, Thr, or Val). This is Methionine aminopeptidase 2-2 from Aspergillus clavatus (strain ATCC 1007 / CBS 513.65 / DSM 816 / NCTC 3887 / NRRL 1 / QM 1276 / 107).